The sequence spans 338 residues: MVFTIKEIAQLIGGHVVGDASINIHKLCKIQEAIPGSITFLANPSYEKYLYTTQASAVIINNSFQPERSVSPSLILVEDPYASFTKLLAHYYQAVLNKHKVGVEEPAHLGKHVKLGNLVYRGAFSYIGDYVTLEDKVQIYPHTYIGDHVSIGENTIIYSGVKIYAGCQIGKNCIIHAGAVVGSNGFGFAPQPTGSYEKIPQVGGVILEDNIEIGANTTIDRATLGNTLIKQGTKIDNLVQIAHNVEVGKDTVIAALTGIAGSTKIGNNCMLGGQVGVAGHTEMGDRTVVAGQAGVTKSYKKGNVTLMGMPAIERKKYLKNYAIFKQLQNILQIKKDEQ.

Histidine 243 (proton acceptor) is an active-site residue.

It belongs to the transferase hexapeptide repeat family. LpxD subfamily. Homotrimer.

It carries out the reaction a UDP-3-O-[(3R)-3-hydroxyacyl]-alpha-D-glucosamine + a (3R)-hydroxyacyl-[ACP] = a UDP-2-N,3-O-bis[(3R)-3-hydroxyacyl]-alpha-D-glucosamine + holo-[ACP] + H(+). Its pathway is bacterial outer membrane biogenesis; LPS lipid A biosynthesis. Catalyzes the N-acylation of UDP-3-O-acylglucosamine using 3-hydroxyacyl-ACP as the acyl donor. Is involved in the biosynthesis of lipid A, a phosphorylated glycolipid that anchors the lipopolysaccharide to the outer membrane of the cell. This Amoebophilus asiaticus (strain 5a2) protein is UDP-3-O-acylglucosamine N-acyltransferase.